The chain runs to 147 residues: Hemoglobin subunit deltaH (147 aa).

Residues 3–147 enclose the Globin domain; it reads RLTDSEKAEV…MANALAHKYH (145 aa). Positions 64 and 93 each coordinate heme b.

Belongs to the globin family. As to quaternary structure, heterotetramer of two delta chains and two alpha chains. In terms of tissue distribution, red blood cells.

The polypeptide is Hemoglobin subunit deltaH (HBD) (Dendrohyrax dorsalis (Beecroft's tree hyrax)).